A 785-amino-acid chain; its full sequence is Altered inheritance of mitochondria protein 3-2 (785 aa).

Disordered stretches follow at residues 33-122 (TGYQ…QPYM), 142-406 (QQVA…SENL), and 418-785 (NVDV…RLHK). Positions 91 to 102 (GSSGNSANGSSA) are enriched in low complexity. 2 stretches are compositionally biased toward polar residues: residues 103–122 (TIPT…QPYM) and 143–199 (QVAT…QLNI). Positions 249-260 (KPYDWEEQKTTK) are enriched in basic and acidic residues. Polar residues-rich tracts occupy residues 283–310 (SRQG…TTTG), 350–366 (ATNN…QNTK), 375–388 (TNKS…SNVM), 395–405 (QMNTKANSSEN), and 455–465 (SSISRDNYNSI). Positions 478–497 (NTGEREGAQELKADIAERSQ) are enriched in basic and acidic residues. Residues 527–556 (AQTSSDIPQKSSLVTDESNISVPNKSQQPM) are compositionally biased toward polar residues. Basic and acidic residues-rich tracts occupy residues 587-613 (KSLE…EQLK) and 624-637 (KNMK…DNKN). Residues 659–671 (SLTSEGNHMNLNT) are compositionally biased toward polar residues. 2 stretches are compositionally biased toward basic and acidic residues: residues 672–686 (EKGK…DESK) and 700–710 (FKREELSKEVV).

It belongs to the AIM3 family.

It localises to the membrane raft. This is Altered inheritance of mitochondria protein 3-2 (AIM3-2) from Candida glabrata (strain ATCC 2001 / BCRC 20586 / JCM 3761 / NBRC 0622 / NRRL Y-65 / CBS 138) (Yeast).